A 170-amino-acid polypeptide reads, in one-letter code: Peptide deformylase (170 aa).

C91 and H133 together coordinate Fe cation. E134 is a catalytic residue. Residue H137 participates in Fe cation binding.

This sequence belongs to the polypeptide deformylase family. The cofactor is Fe(2+).

The catalysed reaction is N-terminal N-formyl-L-methionyl-[peptide] + H2O = N-terminal L-methionyl-[peptide] + formate. Removes the formyl group from the N-terminal Met of newly synthesized proteins. Requires at least a dipeptide for an efficient rate of reaction. N-terminal L-methionine is a prerequisite for activity but the enzyme has broad specificity at other positions. The chain is Peptide deformylase from Histophilus somni (strain 129Pt) (Haemophilus somnus).